Reading from the N-terminus, the 602-residue chain is Elongation factor 4 (602 aa).

Residues 7-196 (SKIRNFCIIA…HPQNEIKSPT (190 aa)) enclose the tr-type G domain. Residues 19-24 (DHGKST) and 136-139 (NKVD) contribute to the GTP site.

It belongs to the TRAFAC class translation factor GTPase superfamily. Classic translation factor GTPase family. LepA subfamily.

Its subcellular location is the cell inner membrane. The catalysed reaction is GTP + H2O = GDP + phosphate + H(+). Functionally, required for accurate and efficient protein synthesis under certain stress conditions. May act as a fidelity factor of the translation reaction, by catalyzing a one-codon backward translocation of tRNAs on improperly translocated ribosomes. Back-translocation proceeds from a post-translocation (POST) complex to a pre-translocation (PRE) complex, thus giving elongation factor G a second chance to translocate the tRNAs correctly. Binds to ribosomes in a GTP-dependent manner. This is Elongation factor 4 from Prochlorococcus marinus (strain MIT 9515).